The primary structure comprises 348 residues: Uroporphyrinogen decarboxylase (348 aa).

Substrate-binding positions include Arg28–Arg32, Asp78, Tyr154, Thr209, and His325.

It belongs to the uroporphyrinogen decarboxylase family. As to quaternary structure, homodimer.

The protein localises to the cytoplasm. The enzyme catalyses uroporphyrinogen III + 4 H(+) = coproporphyrinogen III + 4 CO2. It functions in the pathway porphyrin-containing compound metabolism; protoporphyrin-IX biosynthesis; coproporphyrinogen-III from 5-aminolevulinate: step 4/4. Functionally, catalyzes the decarboxylation of four acetate groups of uroporphyrinogen-III to yield coproporphyrinogen-III. In Rhodopseudomonas palustris (strain HaA2), this protein is Uroporphyrinogen decarboxylase.